A 711-amino-acid polypeptide reads, in one-letter code: Hepatocyte growth factor-like protein (711 aa).

Residues 1–18 (MGWLPLLLLLTQCLGVPG) form the signal peptide. One can recognise a PAN domain in the interval 21–105 (SPLNDFQVLR…GRCDLFQKKD (85 aa)). 20 disulfides stabilise this stretch: C56–C78, C60–C66, C110–C186, C131–C169, C157–C181, C191–C268, C194–C324, C212–C251, C240–C263, C283–C361, C304–C343, C332–C355, C370–C448, C391–C431, C419–C443, C468–C588, C507–C523, C602–C667, C632–C646, and C657–C685. The N-linked (GlcNAc...) asparagine glycan is linked to N72. Kringle domains follow at residues 110–186 (CIMN…IKSC), 191–268 (CVWC…LPRC), 283–361 (CFRG…IRRC), and 370–448 (CYHG…LRRC). N296 is a glycosylation site (N-linked (GlcNAc...) asparagine). One can recognise a Peptidase S1 domain in the interval 484 to 709 (VVGGHPGNSP…FVDWIHKVMR (226 aa)). N-linked (GlcNAc...) asparagine glycosylation is present at N615.

The protein belongs to the peptidase S1 family. Plasminogen subfamily. In terms of assembly, dimer of an alpha chain and a beta chain linked by a disulfide bond. Interacts (via beta chain) with MST1R (via SEMA domain). Post-translationally, cleaved after Arg-483, probably by HPN/Hepsin, to yield the active form consisting of two disulfide-linked chains.

The protein localises to the secreted. This Homo sapiens (Human) protein is Hepatocyte growth factor-like protein (MST1).